A 163-amino-acid polypeptide reads, in one-letter code: Glycine cleavage system H-like protein gcvH5, mitochondrial (163 aa).

Residues 1–23 constitute a mitochondrion transit peptide; that stretch reads MFLFKTTNNLRKSLSNKFFCTRY. The region spanning 50–136 is the Lipoyl-binding domain; sequence IGTLGLTENG…MSKGWLCKIK (87 aa).

This sequence belongs to the GcvH family.

The protein localises to the mitochondrion. The sequence is that of Glycine cleavage system H-like protein gcvH5, mitochondrial (gcvH5) from Dictyostelium discoideum (Social amoeba).